Reading from the N-terminus, the 138-residue chain is Putative pre-16S rRNA nuclease (138 aa).

It belongs to the YqgF nuclease family.

Its subcellular location is the cytoplasm. In terms of biological role, could be a nuclease involved in processing of the 5'-end of pre-16S rRNA. The chain is Putative pre-16S rRNA nuclease from Fusobacterium nucleatum subsp. nucleatum (strain ATCC 25586 / DSM 15643 / BCRC 10681 / CIP 101130 / JCM 8532 / KCTC 2640 / LMG 13131 / VPI 4355).